Consider the following 457-residue polypeptide: Chromosomal replication initiator protein DnaA (457 aa).

Positions 1 to 73 (MANNYQTLYD…SKYLSEEFKK (73 aa)) are domain I, interacts with DnaA modulators. A domain II region spans residues 73 to 108 (KENIVNFEFIIDNEKLLINSNFLIKETNIKNRFNFS). A domain III, AAA+ region region spans residues 109–331 (DELLRYNFNN…GNLKQICFWA (223 aa)). Positions 156, 158, 159, and 160 each coordinate ATP. The tract at residues 332–457 (DNDTNKDLII…LQINLIINKF (126 aa)) is domain IV, binds dsDNA.

Belongs to the DnaA family. Oligomerizes as a right-handed, spiral filament on DNA at oriC.

The protein resides in the cytoplasm. In terms of biological role, plays an essential role in the initiation and regulation of chromosomal replication. ATP-DnaA binds to the origin of replication (oriC) to initiate formation of the DNA replication initiation complex once per cell cycle. Binds the DnaA box (a 9 base pair repeat at the origin) and separates the double-stranded (ds)DNA. Forms a right-handed helical filament on oriC DNA; dsDNA binds to the exterior of the filament while single-stranded (ss)DNA is stabiized in the filament's interior. The ATP-DnaA-oriC complex binds and stabilizes one strand of the AT-rich DNA unwinding element (DUE), permitting loading of DNA polymerase. After initiation quickly degrades to an ADP-DnaA complex that is not apt for DNA replication. Binds acidic phospholipids. The sequence is that of Chromosomal replication initiator protein DnaA from Ureaplasma parvum serovar 3 (strain ATCC 700970).